Reading from the N-terminus, the 162-residue chain is MRLNFLVTTMALLVAFPPPYECRAIDSSSNQPVTDPDEERQSPAVLARMGEEYFIRLGNRNKNSPRSPPDTYPEASQYSKRALQLQLTQRVLEGKVGNVGRWDGNYALRALDSEERERRSEEPPISLDLTFHLLREVLEMARAEQLVQQAHSNRKMMEIFGK.

A signal peptide spans 1–24 (MRLNFLVTTMALLVAFPPPYECRA). The propeptide occupies 25 to 119 (IDSSSNQPVT…ALDSEERERR (95 aa)). The disordered stretch occupies residues 57–79 (LGNRNKNSPRSPPDTYPEASQYS). Phenylalanine 160 bears the Phenylalanine amide mark.

The protein belongs to the sauvagine/corticotropin-releasing factor/urotensin I family.

It is found in the secreted. Its function is as follows. This hormone from hypothalamus regulates the release of corticotropin from pituitary gland. The polypeptide is Corticoliberin-2 (crf2) (Catostomus commersonii (White sucker)).